The following is a 476-amino-acid chain: Aspartyl/glutamyl-tRNA(Asn/Gln) amidotransferase subunit B (476 aa).

The protein belongs to the GatB/GatE family. GatB subfamily. Heterotrimer of A, B and C subunits.

It carries out the reaction L-glutamyl-tRNA(Gln) + L-glutamine + ATP + H2O = L-glutaminyl-tRNA(Gln) + L-glutamate + ADP + phosphate + H(+). It catalyses the reaction L-aspartyl-tRNA(Asn) + L-glutamine + ATP + H2O = L-asparaginyl-tRNA(Asn) + L-glutamate + ADP + phosphate + 2 H(+). Its function is as follows. Allows the formation of correctly charged Asn-tRNA(Asn) or Gln-tRNA(Gln) through the transamidation of misacylated Asp-tRNA(Asn) or Glu-tRNA(Gln) in organisms which lack either or both of asparaginyl-tRNA or glutaminyl-tRNA synthetases. The reaction takes place in the presence of glutamine and ATP through an activated phospho-Asp-tRNA(Asn) or phospho-Glu-tRNA(Gln). The chain is Aspartyl/glutamyl-tRNA(Asn/Gln) amidotransferase subunit B from Oleidesulfovibrio alaskensis (strain ATCC BAA-1058 / DSM 17464 / G20) (Desulfovibrio alaskensis).